An 867-amino-acid chain; its full sequence is Leucine--tRNA ligase (867 aa).

Residues 42-52 (PYPSGNLHMGH) carry the 'HIGH' region motif. A 'KMSKS' region motif is present at residues 625-629 (KMSKS). Lys-628 is a binding site for ATP.

It belongs to the class-I aminoacyl-tRNA synthetase family.

Its subcellular location is the cytoplasm. The catalysed reaction is tRNA(Leu) + L-leucine + ATP = L-leucyl-tRNA(Leu) + AMP + diphosphate. This is Leucine--tRNA ligase from Blochmanniella floridana.